The chain runs to 97 residues: Aspartyl/glutamyl-tRNA(Asn/Gln) amidotransferase subunit C (97 aa).

The protein belongs to the GatC family. As to quaternary structure, heterotrimer of A, B and C subunits.

The enzyme catalyses L-glutamyl-tRNA(Gln) + L-glutamine + ATP + H2O = L-glutaminyl-tRNA(Gln) + L-glutamate + ADP + phosphate + H(+). The catalysed reaction is L-aspartyl-tRNA(Asn) + L-glutamine + ATP + H2O = L-asparaginyl-tRNA(Asn) + L-glutamate + ADP + phosphate + 2 H(+). In terms of biological role, allows the formation of correctly charged Asn-tRNA(Asn) or Gln-tRNA(Gln) through the transamidation of misacylated Asp-tRNA(Asn) or Glu-tRNA(Gln) in organisms which lack either or both of asparaginyl-tRNA or glutaminyl-tRNA synthetases. The reaction takes place in the presence of glutamine and ATP through an activated phospho-Asp-tRNA(Asn) or phospho-Glu-tRNA(Gln). The protein is Aspartyl/glutamyl-tRNA(Asn/Gln) amidotransferase subunit C of Prochlorococcus marinus subsp. pastoris (strain CCMP1986 / NIES-2087 / MED4).